The following is a 518-amino-acid chain: Retinal dehydrogenase 2 (518 aa).

Residues 184–186 (IPW), 210–213 (KPAE), and 264–266 (STE) each bind NAD(+). Residue glutamate 286 is the Proton acceptor of the active site. Cysteine 320 (nucleophile) is an active-site residue. NAD(+)-binding positions include 366 to 370 (KQYNK) and glutamate 417.

The protein belongs to the aldehyde dehydrogenase family. As to quaternary structure, homotetramer.

The protein resides in the cytoplasm. It catalyses the reaction retinal + NAD(+) + H2O = retinoate + NADH + 2 H(+). The catalysed reaction is all-trans-retinal + NAD(+) + H2O = all-trans-retinoate + NADH + 2 H(+). It carries out the reaction all-trans-13,14-dihydroretinal + NAD(+) + H2O = all-trans-13,14-dihydroretinoate + NADH + 2 H(+). Its pathway is cofactor metabolism; retinol metabolism. Its function is as follows. Catalyzes the NAD-dependent oxidation of aldehyde substrates, such as all-trans-retinal and all-trans-13,14-dihydroretinal, to their corresponding carboxylic acids, all-trans-retinoate and all-trans-13,14-dihydroretinoate, respectively. Retinoate signaling is critical for the transcriptional control of many genes, for instance it is crucial for initiation of meiosis in both male and female. Recognizes retinal as substrate, both in its free form and when bound to cellular retinol-binding protein. Lacks activity with benzaldehyde, acetaldehyde and octanal. Displays complete lack of activity with citral. The polypeptide is Retinal dehydrogenase 2 (ALDH1A2) (Gallus gallus (Chicken)).